Consider the following 382-residue polypeptide: Sulfate adenylyltransferase (382 aa).

The protein belongs to the sulfate adenylyltransferase family.

It catalyses the reaction sulfate + ATP + H(+) = adenosine 5'-phosphosulfate + diphosphate. It participates in sulfur metabolism; hydrogen sulfide biosynthesis; sulfite from sulfate: step 1/3. This is Sulfate adenylyltransferase from Ignicoccus hospitalis (strain KIN4/I / DSM 18386 / JCM 14125).